The primary structure comprises 176 residues: MFFDVLGYENSQSSIKINLDLLETNIINIFILIIILIYLGRKFLGNILINRQNRVITSIRESEERLEKSTIRLNEAKNQLSSAQIIINQIKQEAKNTAANVKESILKQGKTDIERLLLNTKNYIYNTELQIKKQIKQQIAALALQKVQSKLKDELDNNIQQKIIDQSLAMLTIRNK.

A helical membrane pass occupies residues 19-39 (LDLLETNIINIFILIIILIYL).

Belongs to the ATPase B chain family. As to quaternary structure, F-type ATPases have 2 components, F(1) - the catalytic core - and F(0) - the membrane proton channel. F(1) has five subunits: alpha(3), beta(3), gamma(1), delta(1), epsilon(1). F(0) has four main subunits: a(1), b(1), b'(1) and c(10-14). The alpha and beta chains form an alternating ring which encloses part of the gamma chain. F(1) is attached to F(0) by a central stalk formed by the gamma and epsilon chains, while a peripheral stalk is formed by the delta, b and b' chains.

Its subcellular location is the plastid. It is found in the chloroplast thylakoid membrane. F(1)F(0) ATP synthase produces ATP from ADP in the presence of a proton or sodium gradient. F-type ATPases consist of two structural domains, F(1) containing the extramembraneous catalytic core and F(0) containing the membrane proton channel, linked together by a central stalk and a peripheral stalk. During catalysis, ATP synthesis in the catalytic domain of F(1) is coupled via a rotary mechanism of the central stalk subunits to proton translocation. In terms of biological role, component of the F(0) channel, it forms part of the peripheral stalk, linking F(1) to F(0). The chain is ATP synthase subunit b, chloroplastic from Galdieria sulphuraria (Red alga).